The chain runs to 408 residues: Aminopeptidase T (408 aa).

Positions 250, 316, 340, 345, 376, and 378 each coordinate a divalent metal cation.

This sequence belongs to the peptidase M29 family. Homodimer. It depends on Co(2+) as a cofactor. The cofactor is Zn(2+). Mg(2+) is required as a cofactor.

Metal-dependent exopeptidase. In Thermus aquaticus, this protein is Aminopeptidase T.